The primary structure comprises 343 residues: Glyceraldehyde-3-phosphate dehydrogenase (343 aa).

NAD(+) contacts are provided by residues 11–12 (TI) and Gly110. 139–141 (SCN) is a binding site for D-glyceraldehyde 3-phosphate. The active-site Nucleophile is the Cys140. An NAD(+)-binding site is contributed by Arg168. D-glyceraldehyde 3-phosphate is bound at residue 194-195 (HG). Gln301 is a binding site for NAD(+).

This sequence belongs to the glyceraldehyde-3-phosphate dehydrogenase family. As to quaternary structure, homotetramer.

The protein resides in the cytoplasm. The enzyme catalyses D-glyceraldehyde 3-phosphate + phosphate + NADP(+) = (2R)-3-phospho-glyceroyl phosphate + NADPH + H(+). The catalysed reaction is D-glyceraldehyde 3-phosphate + phosphate + NAD(+) = (2R)-3-phospho-glyceroyl phosphate + NADH + H(+). It functions in the pathway carbohydrate degradation; glycolysis; pyruvate from D-glyceraldehyde 3-phosphate: step 1/5. This Methanoregula boonei (strain DSM 21154 / JCM 14090 / 6A8) protein is Glyceraldehyde-3-phosphate dehydrogenase.